A 276-amino-acid chain; its full sequence is uncharacterized protein (276 aa).

The signal sequence occupies residues Met1–Ala19. A lipid anchor (N-palmitoyl cysteine) is attached at Cys20. Cys20 carries the S-diacylglycerol cysteine lipid modification.

It belongs to the NlpA lipoprotein family.

It is found in the cell membrane. This is an uncharacterized protein from Bacillus subtilis (strain 168).